Reading from the N-terminus, the 258-residue chain is Imidazole glycerol phosphate synthase subunit HisF (258 aa).

Residues Asp-12 and Asp-131 contribute to the active site.

Belongs to the HisA/HisF family. Heterodimer of HisH and HisF.

The protein resides in the cytoplasm. It catalyses the reaction 5-[(5-phospho-1-deoxy-D-ribulos-1-ylimino)methylamino]-1-(5-phospho-beta-D-ribosyl)imidazole-4-carboxamide + L-glutamine = D-erythro-1-(imidazol-4-yl)glycerol 3-phosphate + 5-amino-1-(5-phospho-beta-D-ribosyl)imidazole-4-carboxamide + L-glutamate + H(+). Its pathway is amino-acid biosynthesis; L-histidine biosynthesis; L-histidine from 5-phospho-alpha-D-ribose 1-diphosphate: step 5/9. Its function is as follows. IGPS catalyzes the conversion of PRFAR and glutamine to IGP, AICAR and glutamate. The HisF subunit catalyzes the cyclization activity that produces IGP and AICAR from PRFAR using the ammonia provided by the HisH subunit. The chain is Imidazole glycerol phosphate synthase subunit HisF from Sinorhizobium fredii (strain NBRC 101917 / NGR234).